The primary structure comprises 1116 residues: Error-prone DNA polymerase (1116 aa).

The protein belongs to the DNA polymerase type-C family. DnaE2 subfamily.

It localises to the cytoplasm. The catalysed reaction is DNA(n) + a 2'-deoxyribonucleoside 5'-triphosphate = DNA(n+1) + diphosphate. Its function is as follows. DNA polymerase involved in damage-induced mutagenesis and translesion synthesis (TLS). It is not the major replicative DNA polymerase. This Sinorhizobium medicae (strain WSM419) (Ensifer medicae) protein is Error-prone DNA polymerase.